A 331-amino-acid polypeptide reads, in one-letter code: Glyceraldehyde-3-phosphate dehydrogenase (331 aa).

NAD(+)-binding positions include 11 to 12 (RI), Asp-33, and Arg-78. D-glyceraldehyde 3-phosphate-binding positions include 148–150 (SCT), Thr-179, 208–209 (TG), and Arg-231. Cys-149 serves as the catalytic Nucleophile. NAD(+) is bound at residue Asn-313.

The protein belongs to the glyceraldehyde-3-phosphate dehydrogenase family. Homotetramer.

The protein resides in the cytoplasm. The catalysed reaction is D-glyceraldehyde 3-phosphate + phosphate + NAD(+) = (2R)-3-phospho-glyceroyl phosphate + NADH + H(+). It functions in the pathway carbohydrate degradation; glycolysis; pyruvate from D-glyceraldehyde 3-phosphate: step 1/5. In Eremothecium gossypii (strain ATCC 10895 / CBS 109.51 / FGSC 9923 / NRRL Y-1056) (Yeast), this protein is Glyceraldehyde-3-phosphate dehydrogenase (GPD).